The following is a 291-amino-acid chain: Beta-lactamase CTX-M-4 (291 aa).

The first 28 residues, 1-28 (MMTQSIRRSMLTVMATLPLLFSSATLHA), serve as a signal peptide directing secretion. S73 serves as the catalytic Acyl-ester intermediate. 237 to 239 (KTG) serves as a coordination point for substrate.

This sequence belongs to the class-A beta-lactamase family.

It catalyses the reaction a beta-lactam + H2O = a substituted beta-amino acid. Its function is as follows. Has cefotaxime-hydrolyzing activity. This chain is Beta-lactamase CTX-M-4 (bla), found in Salmonella typhimurium.